Here is a 71-residue protein sequence, read N- to C-terminus: General transcription and DNA repair factor IIH subunit TFB5 (71 aa).

It belongs to the TFB5 family. In terms of assembly, component of the 7-subunit TFIIH core complex.

The protein localises to the nucleus. It localises to the chromosome. Functionally, component of the general transcription and DNA repair factor IIH (TFIIH) core complex, which is involved in general and transcription-coupled nucleotide excision repair (NER) of damaged DNA and in RNA transcription by RNA polymerase II. In NER, TFIIH acts by opening DNA around the lesion to allow the excision of the damaged oligonucleotide and its replacement by a new DNA fragment. In transcription, TFIIH has an essential role in transcription initiation. When the pre-initiation complex (PIC) has been established, TFIIH is required for promoter opening and promoter escape. Necessary for the stability of the TFIIH complex and for the presence of normal levels of TFIIH in the cell. Required for efficient binding of TFIIH to damaged DNA. Dispensable for normal development, but required when transcription is challenged. This Caenorhabditis elegans protein is General transcription and DNA repair factor IIH subunit TFB5.